The chain runs to 397 residues: Phosphoglycerate kinase (397 aa).

Substrate contacts are provided by residues 23 to 25, Arg38, 61 to 64, Arg122, and Arg155; these read DFN and HMGK. Residues Lys206, Gly296, Glu327, and 353–356 each bind ATP; that span reads GGDS.

It belongs to the phosphoglycerate kinase family. In terms of assembly, monomer.

Its subcellular location is the cytoplasm. It carries out the reaction (2R)-3-phosphoglycerate + ATP = (2R)-3-phospho-glyceroyl phosphate + ADP. The protein operates within carbohydrate degradation; glycolysis; pyruvate from D-glyceraldehyde 3-phosphate: step 2/5. This is Phosphoglycerate kinase from Clostridium perfringens (strain ATCC 13124 / DSM 756 / JCM 1290 / NCIMB 6125 / NCTC 8237 / Type A).